An 88-amino-acid polypeptide reads, in one-letter code: Small ribosomal subunit protein uS15 (88 aa).

The protein belongs to the universal ribosomal protein uS15 family. Part of the 30S ribosomal subunit. Forms a bridge to the 50S subunit in the 70S ribosome, contacting the 23S rRNA.

In terms of biological role, one of the primary rRNA binding proteins, it binds directly to 16S rRNA where it helps nucleate assembly of the platform of the 30S subunit by binding and bridging several RNA helices of the 16S rRNA. Functionally, forms an intersubunit bridge (bridge B4) with the 23S rRNA of the 50S subunit in the ribosome. In Borreliella burgdorferi (strain ATCC 35210 / DSM 4680 / CIP 102532 / B31) (Borrelia burgdorferi), this protein is Small ribosomal subunit protein uS15.